The primary structure comprises 278 residues: 4-diphosphocytidyl-2-C-methyl-D-erythritol kinase (278 aa).

Lysine 9 is a catalytic residue. ATP is bound at residue 89–99; sequence PVASGIGGGSA. Residue aspartate 128 is part of the active site.

This sequence belongs to the GHMP kinase family. IspE subfamily.

It catalyses the reaction 4-CDP-2-C-methyl-D-erythritol + ATP = 4-CDP-2-C-methyl-D-erythritol 2-phosphate + ADP + H(+). It functions in the pathway isoprenoid biosynthesis; isopentenyl diphosphate biosynthesis via DXP pathway; isopentenyl diphosphate from 1-deoxy-D-xylulose 5-phosphate: step 3/6. In terms of biological role, catalyzes the phosphorylation of the position 2 hydroxy group of 4-diphosphocytidyl-2C-methyl-D-erythritol. In Cereibacter sphaeroides (strain KD131 / KCTC 12085) (Rhodobacter sphaeroides), this protein is 4-diphosphocytidyl-2-C-methyl-D-erythritol kinase.